We begin with the raw amino-acid sequence, 541 residues long: uncharacterized protein (541 aa).

12 helical membrane passes run 99 to 119, 131 to 153, 165 to 185, 187 to 207, 224 to 244, 256 to 276, 325 to 345, 367 to 387, 409 to 429, 439 to 459, 472 to 494, and 508 to 528; these read WIVV…SSVY, GVSI…FGSL, FVVY…GGCA, NIWT…TPLS, YVLP…PIIG, WVFW…FFFM, LLIT…VYII, IGLS…CTPI, LYPL…FAWT, WIVP…VFFV, AASA…SLVG, and SLLG…FIYG.

Belongs to the major facilitator superfamily. CAR1 family.

The protein localises to the membrane. This is an uncharacterized protein from Schizosaccharomyces pombe (strain 972 / ATCC 24843) (Fission yeast).